Reading from the N-terminus, the 562-residue chain is MSGTILENLSGRKLSILVATLLLCQVLCFLLGGLYAPLPAGHVTVLGSLCREDHARQNDTGFLLYSRGAGACIPVTREEVEQDSTKMANELVHVFQMPLPRDLRDLDYSRWQQNLIGVLQVEFGYDSSSELREPPRELQLTIDMRLAYRNKGDPDNGWKLYAHGVEHRYLDCVTSHVGPTETLYSCDMIPLFELGALHHSFYLLNLRFPLDTPSQMNLQFGHMHDLTLTAIHQNGGFTQIWLLLKTMLFPFVVGIMIWFWRRVHLLQRSPALLEYMLIYLGAALTFLNLPLEYLSLVYEMPYMLLLSDIRQGIFYAMLLTFWLVFAGEHMLIQDAPNKSTIRSRYWKHLSAVVVGCISLFVFDICERGVQLRNPFYSIWTTPLGAKVAMTFIVLAGVSAAIYFLFLCYMIWKVFRNIGDKRTSLPSMSQARRLHYEGLIYRFKFLMLATLVCAALTVAGFIMGQMAEGQWDWNDNVAIQPTSAFLTGVYGMWNIYIFALLILYAPSHKQWPAMHHSDETTQSNENIVASAASEEIEFSHLPSDSNPSEISSLTSFTRKVAFD.

At 1–13 (MSGTILENLSGRK) the chain is on the cytoplasmic side. A helical transmembrane segment spans residues 14-34 (LSILVATLLLCQVLCFLLGGL). The Lumenal portion of the chain corresponds to 35-239 (YAPLPAGHVT…AIHQNGGFTQ (205 aa)). N58 carries an N-linked (GlcNAc...) asparagine glycan. Residues 240-260 (IWLLLKTMLFPFVVGIMIWFW) traverse the membrane as a helical segment. Residues 261–270 (RRVHLLQRSP) are Cytoplasmic-facing. Residues 271–291 (ALLEYMLIYLGAALTFLNLPL) traverse the membrane as a helical segment. The Lumenal portion of the chain corresponds to 292–311 (EYLSLVYEMPYMLLLSDIRQ). The chain crosses the membrane as a helical span at residues 312–332 (GIFYAMLLTFWLVFAGEHMLI). The Cytoplasmic segment spans residues 333–344 (QDAPNKSTIRSR). Residues 345 to 365 (YWKHLSAVVVGCISLFVFDIC) traverse the membrane as a helical segment. Residues 366–390 (ERGVQLRNPFYSIWTTPLGAKVAMT) are Lumenal-facing. The helical transmembrane segment at 391–411 (FIVLAGVSAAIYFLFLCYMIW) threads the bilayer. The Cytoplasmic portion of the chain corresponds to 412 to 441 (KVFRNIGDKRTSLPSMSQARRLHYEGLIYR). The helical transmembrane segment at 442-462 (FKFLMLATLVCAALTVAGFIM) threads the bilayer. Residues 463-482 (GQMAEGQWDWNDNVAIQPTS) lie on the Lumenal side of the membrane. The helical transmembrane segment at 483–503 (AFLTGVYGMWNIYIFALLILY) threads the bilayer. The Cytoplasmic portion of the chain corresponds to 504–562 (APSHKQWPAMHHSDETTQSNENIVASAASEEIEFSHLPSDSNPSEISSLTSFTRKVAFD).

It belongs to the wntless family. As to quaternary structure, interacts with wg; in the Golgi. Interacts with Vps35, a component of the retromer complex; wls stability is regulated by Vps35.

Its subcellular location is the presynaptic cell membrane. It localises to the postsynaptic cell membrane. It is found in the cell membrane. The protein localises to the endoplasmic reticulum membrane. The protein resides in the endosome membrane. Its subcellular location is the golgi apparatus membrane. A segment polarity gene required for wingless (wg)-dependent patterning processes, acting in both wg-sending cells and wg-target cells. In non-neuronal cells wls directs wg secretion. The wls traffic loop encompasses the Golgi, the cell surface, an endocytic compartment and a retrograde route leading back to the Golgi, and involves clathrin-mediated endocytosis and the retromer complex (a conserved protein complex consisting of Vps35 and Vps26). In neuronal cells (the larval motorneuron NMJ), the wg signal moves across the synapse via the release of wls-containing exosome-like vesicles. Postsynaptic wls is required for the trafficking of fz2 through the fz2-interacting protein Grip. In Drosophila sechellia (Fruit fly), this protein is Protein wntless.